Here is a 203-residue protein sequence, read N- to C-terminus: Flagellar transcriptional regulator FlhC (203 aa).

Residues Cys-161, Cys-164, Cys-181, and Cys-184 each contribute to the Zn(2+) site.

Belongs to the FlhC family. In terms of assembly, heterohexamer composed of two FlhC and four FlhD subunits. Each FlhC binds a FlhD dimer, forming a heterotrimer, and a hexamer assembles by dimerization of two heterotrimers. It depends on Zn(2+) as a cofactor.

It is found in the cytoplasm. Its function is as follows. Functions in complex with FlhD as a master transcriptional regulator that regulates transcription of several flagellar and non-flagellar operons by binding to their promoter region. Activates expression of class 2 flagellar genes, including fliA, which is a flagellum-specific sigma factor that turns on the class 3 genes. Also regulates genes whose products function in a variety of physiological pathways. In Cupriavidus necator (strain ATCC 17699 / DSM 428 / KCTC 22496 / NCIMB 10442 / H16 / Stanier 337) (Ralstonia eutropha), this protein is Flagellar transcriptional regulator FlhC.